The following is a 49-amino-acid chain: Large ribosomal subunit protein bL33B (49 aa).

The protein belongs to the bacterial ribosomal protein bL33 family.

The chain is Large ribosomal subunit protein bL33B from Geobacillus kaustophilus (strain HTA426).